A 368-amino-acid chain; its full sequence is Transaldolase (368 aa).

Lysine 140 serves as the catalytic Schiff-base intermediate with substrate.

It belongs to the transaldolase family. Type 2 subfamily.

It is found in the cytoplasm. It carries out the reaction D-sedoheptulose 7-phosphate + D-glyceraldehyde 3-phosphate = D-erythrose 4-phosphate + beta-D-fructose 6-phosphate. The protein operates within carbohydrate degradation; pentose phosphate pathway; D-glyceraldehyde 3-phosphate and beta-D-fructose 6-phosphate from D-ribose 5-phosphate and D-xylulose 5-phosphate (non-oxidative stage): step 2/3. In terms of biological role, transaldolase is important for the balance of metabolites in the pentose-phosphate pathway. The chain is Transaldolase from Kocuria rhizophila (strain ATCC 9341 / DSM 348 / NBRC 103217 / DC2201).